Reading from the N-terminus, the 134-residue chain is Interferon-induced transmembrane protein 5 (134 aa).

Positions 1–20 (MDTSYPREDPRAPSSRKADA) are enriched in basic and acidic residues. Residues 1–31 (MDTSYPREDPRAPSSRKADAAAHTALSMGTP) form a disordered region. At 1-39 (MDTSYPREDPRAPSSRKADAAAHTALSMGTPGPTPRDHM) the chain is on the extracellular side. The chain crosses the membrane as a helical span at residues 40–60 (LWSVFSTMYLNLCCLGFLALV). 3 S-palmitoyl cysteine lipidation sites follow: cysteine 52, cysteine 53, and cysteine 86. Residues 61-88 (HSVKARDQKMAGNLEAARQYGSKAKCYN) are Cytoplasmic-facing. Residues 89 to 109 (ILAAMWTLVPPLLLLGLVVTG) traverse the membrane as a helical segment. Residues 110-134 (ALHLSKLAKDSAAFFSTKFDEEDYN) lie on the Extracellular side of the membrane.

The protein belongs to the CD225/Dispanin family. In terms of assembly, interacts with FKBP11. Post-translationally, palmitoylated. Detected in embryonic bone (at protein level). Highly expressed in osteoblasts of adults and embryos. Expressed in primitive hemopoietic cells.

Its subcellular location is the cell membrane. Its function is as follows. Required for normal bone mineralization. The polypeptide is Interferon-induced transmembrane protein 5 (Ifitm5) (Mus musculus (Mouse)).